A 198-amino-acid chain; its full sequence is dCTP deaminase, dUMP-forming (198 aa).

DCTP is bound by residues 115 to 120, Asp133, 141 to 143, Gln162, Tyr175, and Lys184; these read KSSIAR and TLE. Glu143 acts as the Proton donor/acceptor in catalysis.

Belongs to the dCTP deaminase family. Homotrimer.

The catalysed reaction is dCTP + 2 H2O = dUMP + NH4(+) + diphosphate. Its pathway is pyrimidine metabolism; dUMP biosynthesis; dUMP from dCTP: step 1/1. Bifunctional enzyme that catalyzes both the deamination of dCTP to dUTP and the hydrolysis of dUTP to dUMP without releasing the toxic dUTP intermediate. The sequence is that of dCTP deaminase, dUMP-forming from Nanoarchaeum equitans (strain Kin4-M).